Here is a 362-residue protein sequence, read N- to C-terminus: Class I histocompatibility antigen, Gogo-OKO alpha chain (362 aa).

Positions 1–24 are cleaved as a signal peptide; it reads MAVVAPRTLLLLLSGTLALTRTWA. Residues 25-114 are alpha-1; that stretch reads GSHSMRYFYT…LRGYYNQSEG (90 aa). Residues 25 to 308 are Extracellular-facing; that stretch reads GSHSMRYFYT…EPSSQPTIPI (284 aa). A glycan (N-linked (GlcNAc...) asparagine) is linked at N110. The interval 115-206 is alpha-2; it reads GSHTIQRMYG…ENGKETLQRT (92 aa). Cystine bridges form between C125/C188 and C227/C283. The alpha-3 stretch occupies residues 207–298; the sequence is DPPKTHMTHH…GLPKPLTLRW (92 aa). An Ig-like C1-type domain is found at 209–295; it reads PKTHMTHHPV…QHEGLPKPLT (87 aa). Positions 299 to 308 are connecting peptide; that stretch reads EPSSQPTIPI. A helical membrane pass occupies residues 309–332; sequence VGIIAGLVLLGAVITGAVVAAMMW. Topologically, residues 333–362 are cytoplasmic; that stretch reads RKKSSGRKGGSYSQAASSDSAQGSDVSLTA. Residues 337–362 form a disordered region; it reads SGRKGGSYSQAASSDSAQGSDVSLTA. A compositionally biased stretch (low complexity) spans 342–362; the sequence is GSYSQAASSDSAQGSDVSLTA.

This sequence belongs to the MHC class I family. As to quaternary structure, heterodimer of an alpha chain and a beta chain (beta-2-microglobulin).

The protein localises to the membrane. Involved in the presentation of foreign antigens to the immune system. This Gorilla gorilla gorilla (Western lowland gorilla) protein is Class I histocompatibility antigen, Gogo-OKO alpha chain.